Reading from the N-terminus, the 271-residue chain is Formamidopyrimidine-DNA glycosylase (271 aa).

Pro2 serves as the catalytic Schiff-base intermediate with DNA. The active-site Proton donor is the Glu3. Catalysis depends on Lys56, which acts as the Proton donor; for beta-elimination activity. DNA contacts are provided by His89, Arg107, and Lys151. The FPG-type zinc finger occupies 236–270 (NVYGRAGLQCRQCGTPVRLSRQGQRSTYFCPHCQR). The Proton donor; for delta-elimination activity role is filled by Arg260.

The protein belongs to the FPG family. Monomer. Requires Zn(2+) as cofactor.

It carries out the reaction Hydrolysis of DNA containing ring-opened 7-methylguanine residues, releasing 2,6-diamino-4-hydroxy-5-(N-methyl)formamidopyrimidine.. The enzyme catalyses 2'-deoxyribonucleotide-(2'-deoxyribose 5'-phosphate)-2'-deoxyribonucleotide-DNA = a 3'-end 2'-deoxyribonucleotide-(2,3-dehydro-2,3-deoxyribose 5'-phosphate)-DNA + a 5'-end 5'-phospho-2'-deoxyribonucleoside-DNA + H(+). In terms of biological role, involved in base excision repair of DNA damaged by oxidation or by mutagenic agents. Acts as a DNA glycosylase that recognizes and removes damaged bases. Has a preference for oxidized purines, such as 7,8-dihydro-8-oxoguanine (8-oxoG). Has AP (apurinic/apyrimidinic) lyase activity and introduces nicks in the DNA strand. Cleaves the DNA backbone by beta-delta elimination to generate a single-strand break at the site of the removed base with both 3'- and 5'-phosphates. The sequence is that of Formamidopyrimidine-DNA glycosylase from Acidovorax ebreus (strain TPSY) (Diaphorobacter sp. (strain TPSY)).